The primary structure comprises 166 residues: Nucleotide-binding protein Dred_1927 (166 aa).

This sequence belongs to the YajQ family.

Functionally, nucleotide-binding protein. This chain is Nucleotide-binding protein Dred_1927, found in Desulforamulus reducens (strain ATCC BAA-1160 / DSM 100696 / MI-1) (Desulfotomaculum reducens).